The chain runs to 287 residues: Thioredoxin-related transmembrane protein 2 (287 aa).

The first 35 residues, 1–35 (MAVLAPLLAFLYAVPGLLRWVSQPYYLLSALLSVS), serve as a signal peptide directing secretion. Over 36–112 (FLLVRKVPPV…ILFFRLDLRM (77 aa)) the chain is Extracellular. Residues 113-133 (GLLYITLCIVFLMTCKPPLYL) traverse the membrane as a helical segment. Residues 134-287 (GPEHIKYFSD…NEYNDSKKDQ (154 aa)) lie on the Cytoplasmic side of the membrane. One can recognise a Thioredoxin domain in the interval 135-269 (PEHIKYFSDK…LYQKAKKIRK (135 aa)). The short motif at 284–287 (KKDQ) is the Di-lysine motif element.

Monomer. Homodimer; disulfide-linked. Occurs in both reduced and oxidized monomeric form. Oxidative conditions increase homodimerization.

Its subcellular location is the endoplasmic reticulum membrane. It localises to the mitochondrion membrane. Functionally, endoplasmic reticulum and mitochondria-associated protein that probably functions as a regulator of cellular redox state and thereby regulates protein post-translational modification, protein folding and mitochondrial activity. The sequence is that of Thioredoxin-related transmembrane protein 2 (tmx2) from Xenopus tropicalis (Western clawed frog).